A 305-amino-acid chain; its full sequence is Pseudouridine-5'-phosphate glycosidase (305 aa).

The active-site Proton donor is E30. Residues K91 and V111 each coordinate substrate. D143 lines the Mn(2+) pocket. 145–147 (SAD) lines the substrate pocket. K164 (nucleophile) is an active-site residue.

It belongs to the pseudouridine-5'-phosphate glycosidase family. Homotrimer. Mn(2+) is required as a cofactor.

It carries out the reaction D-ribose 5-phosphate + uracil = psi-UMP + H2O. Functionally, catalyzes the reversible cleavage of pseudouridine 5'-phosphate (PsiMP) to ribose 5-phosphate and uracil. Functions biologically in the cleavage direction, as part of a pseudouridine degradation pathway. This chain is Pseudouridine-5'-phosphate glycosidase, found in Mesorhizobium japonicum (strain LMG 29417 / CECT 9101 / MAFF 303099) (Mesorhizobium loti (strain MAFF 303099)).